The following is a 568-amino-acid chain: Vacuolar protein 8 (568 aa).

The N-myristoyl glycine moiety is linked to residue G2. 3 S-palmitoyl cysteine lipidation sites follow: C4, C5, and C7. 9 ARM repeats span residues 37–74 (DKDN…FAEI), 75–114 (TEKY…NLAV), 116–155 (NENK…NLAT), 157–196 (DDNK…NMTH), 198–237 (GENR…NIAV), 241–280 (NRRK…NLAS), 282–321 (TGYQ…NISI), 323–363 (PLNE…NLAA), and 407–446 (DNSK…NLCS).

It belongs to the beta-catenin family.

Its subcellular location is the vacuole membrane. In terms of biological role, functions in both vacuole inheritance and protein targeting from the cytoplasm to vacuole. The polypeptide is Vacuolar protein 8 (VAC8) (Eremothecium gossypii (strain ATCC 10895 / CBS 109.51 / FGSC 9923 / NRRL Y-1056) (Yeast)).